Here is a 2169-residue protein sequence, read N- to C-terminus: Protein sidekick-1 (2169 aa).

Residues 1–50 (MVGRKVDREIIARRNSRRDGMMMKLNFCFFFCRRWWAFLLLQLHMLQALA) form the signal peptide. Residues 51–1961 (QDDVAPYFKT…TEAPFYEEWW (1911 aa)) are Extracellular-facing. Ig-like C2-type domains follow at residues 56–138 (PYFK…SEVQ), 143–229 (GNFM…SPLI), 245–333 (PIIV…AFIS), 338–428 (PYFT…LDVT), and 432–521 (PAFI…VMLT). Cys78 and Cys121 are joined by a disulfide. N-linked (GlcNAc...) asparagine glycosylation is found at Asn93, Asn223, and Asn253. Intrachain disulfides connect Cys267-Cys314, Cys360-Cys410, and Cys453-Cys505. Asn502, Asn524, and Asn534 each carry an N-linked (GlcNAc...) asparagine glycan. In terms of domain architecture, Ig-like C2-type 6 spans 525 to 615 (RTFIVHPPEN…GNDSRMARLE (91 aa)). Cysteines 547 and 599 form a disulfide. 7 N-linked (GlcNAc...) asparagine glycosylation sites follow: Asn607, Asn631, Asn734, Asn773, Asn834, Asn967, and Asn977. 13 Fibronectin type-III domains span residues 622–718 (SPQN…LPEE), 723–819 (PPKN…TLQG), 824–922 (PPQN…TLED), 926–1020 (AVGH…VPPE), 1024–1123 (APSN…TLQA), 1128–1226 (APGS…TRES), 1231–1328 (PPEN…TKDD), 1332–1426 (PPIR…TEKR), 1431–1528 (PPQQ…TLQD), 1533–1651 (PPSS…VGEA), 1656–1752 (APQN…THQA), 1756–1851 (APSF…AGPA), and 1854–1955 (SPGS…TEAP). N-linked (GlcNAc...) asparagine glycosylation is found at Asn1234 and Asn1285. Residues 1423-1443 (TEKRERPAPPQQLTTPQSDVS) form a disordered region. The span at 1433–1443 (QQLTTPQSDVS) shows a compositional bias: polar residues. N-linked (GlcNAc...) asparagine glycans are attached at residues Asn1606, Asn1700, Asn1719, Asn1771, and Asn1845. A helical transmembrane segment spans residues 1962-1982 (FLLVMALSSLILILLVVFALV). The Cytoplasmic segment spans residues 1983 to 2169 (LHGQSKKYKN…TPVTGFSSFV (187 aa)). Disordered regions lie at residues 2028–2050 (TFSKKNGTRSPPRPSPGGLHYSD) and 2145–2169 (GGVYTPTGQPAPGSRTPVTGFSSFV). A compositionally biased stretch (polar residues) spans 2160 to 2169 (TPVTGFSSFV). The PDZ-binding signature appears at 2163-2169 (TGFSSFV).

This sequence belongs to the sidekick family. In terms of assembly, homodimer; mediates homophilic interactions to promote cell adhesion. As to expression, expressed by non-overlapping subsets of retinal neurons. SDK1, SDK2, DSCAM and DSCAML1 are expressed in non-overlapping subsets of interneurons and retinal ganglion cells (RGCs) that form synapses in distinct inner plexiform layer (IPL) sublaminae.

Its subcellular location is the cell membrane. It is found in the synapse. In terms of biological role, adhesion molecule that promotes lamina-specific synaptic connections in the retina. Expressed in specific subsets of interneurons and retinal ganglion cells (RGCs) and promotes synaptic connectivity via homophilic interactions. The chain is Protein sidekick-1 from Gallus gallus (Chicken).